We begin with the raw amino-acid sequence, 305 residues long: Nod factor export ATP-binding protein I (305 aa).

In terms of domain architecture, ABC transporter spans 8–237 (IDLVGVRKSF…HIGCNVIEIY (230 aa)). Residue 40–47 (GPNGAGKS) participates in ATP binding.

It belongs to the ABC transporter superfamily. Lipooligosaccharide exporter (TC 3.A.1.102) family. The complex is composed of two ATP-binding proteins (NodI) and two transmembrane proteins (NodJ).

The protein resides in the cell inner membrane. In terms of biological role, part of the ABC transporter complex NodIJ involved in the export of the nodulation factors (Nod factors), the bacterial signal molecules that induce symbiosis and subsequent nodulation induction. Nod factors are LCO (lipo-chitin oligosaccharide), a modified beta-1,4-linked N-acetylglucosamine oligosaccharide. This subunit is responsible for energy coupling to the transport system. The polypeptide is Nod factor export ATP-binding protein I (Bradyrhizobium sp. (strain SNU001)).